Reading from the N-terminus, the 511-residue chain is Steroid 17-alpha-hydroxylase/17,20 lyase (511 aa).

Cys-442 serves as a coordination point for heme.

The protein belongs to the cytochrome P450 family. Requires heme as cofactor.

Its subcellular location is the endoplasmic reticulum membrane. It is found in the microsome membrane. The enzyme catalyses a C21-steroid + reduced [NADPH--hemoprotein reductase] + O2 = a 17alpha-hydroxy-C21-steroid + oxidized [NADPH--hemoprotein reductase] + H2O + H(+). The catalysed reaction is progesterone + reduced [NADPH--hemoprotein reductase] + O2 = 17alpha-hydroxyprogesterone + oxidized [NADPH--hemoprotein reductase] + H2O + H(+). It carries out the reaction pregnenolone + reduced [NADPH--hemoprotein reductase] + O2 = 17alpha-hydroxypregnenolone + oxidized [NADPH--hemoprotein reductase] + H2O + H(+). It catalyses the reaction 17alpha-hydroxyprogesterone + reduced [NADPH--hemoprotein reductase] + O2 = androst-4-ene-3,17-dione + acetate + oxidized [NADPH--hemoprotein reductase] + H2O + 2 H(+). The enzyme catalyses 17alpha-hydroxyprogesterone + reduced [NADPH--hemoprotein reductase] + O2 = 16alpha,17alpha-dihydroxyprogesterone + oxidized [NADPH--hemoprotein reductase] + H2O + H(+). The catalysed reaction is 16alpha,17alpha-dihydroxyprogesterone + reduced [NADPH--hemoprotein reductase] + O2 = 6beta,16alpha,17alpha-trihydroxyprogesterone + oxidized [NADPH--hemoprotein reductase] + H2O + H(+). It carries out the reaction 17alpha-hydroxypregnenolone + reduced [NADPH--hemoprotein reductase] + O2 = 3beta-hydroxyandrost-5-en-17-one + acetate + oxidized [NADPH--hemoprotein reductase] + H2O + 2 H(+). It catalyses the reaction 16alpha,17alpha-dihydroxypregnenolone + reduced [NADPH--hemoprotein reductase] + O2 = 3beta,16alpha-dihydroxy-androst-5-en-17-one + acetate + oxidized [NADPH--hemoprotein reductase] + H2O + 2 H(+). The enzyme catalyses 3beta-hydroxyandrost-5-en-17-one + reduced [NADPH--hemoprotein reductase] + O2 = 3beta,16alpha-dihydroxy-androst-5-en-17-one + oxidized [NADPH--hemoprotein reductase] + H2O + H(+). The catalysed reaction is androst-4-ene-3,17-dione + reduced [NADPH--hemoprotein reductase] + O2 = 16alpha-hydroxyandrost-4-ene-3,17-dione + oxidized [NADPH--hemoprotein reductase] + H2O + H(+). It participates in steroid hormone biosynthesis. Its pathway is steroid biosynthesis; glucocorticoid biosynthesis. Regulated predominantly by intracellular cAMP levels. The 17,20-lyase activity is stimulated by cytochrome b5, which acts as an allosteric effector increasing the Vmax of the lyase activity. Functionally, a cytochrome P450 monooxygenase involved in corticoid and androgen biosynthesis. Catalyzes 17-alpha hydroxylation of C21 steroids, which is common for both pathways. A second oxidative step, required only for androgen synthesis, involves an acyl-carbon cleavage. The 17-alpha hydroxy intermediates, as part of adrenal glucocorticoids biosynthesis pathway, are precursors of cortisol. Hydroxylates steroid hormones, pregnenolone and progesterone to form 17-alpha hydroxy metabolites, followed by the cleavage of the C17-C20 bond to form C19 steroids, dehydroepiandrosterone (DHEA) and androstenedione. Has 16-alpha hydroxylase activity. Catalyzes 16-alpha hydroxylation of 17-alpha hydroxy pregnenolone, followed by the cleavage of the C17-C20 bond to form 16-alpha-hydroxy DHEA. Also 16-alpha hydroxylates androgens, relevant for estriol synthesis. Mechanistically, uses molecular oxygen inserting one oxygen atom into a substrate, and reducing the second into a water molecule, with two electrons provided by NADPH via cytochrome P450 reductase (CPR; NADPH-ferrihemoprotein reductase). In Mesocricetus auratus (Golden hamster), this protein is Steroid 17-alpha-hydroxylase/17,20 lyase (CYP17A1).